We begin with the raw amino-acid sequence, 380 residues long: Cytochrome b (380 aa).

The next 4 membrane-spanning stretches (helical) occupy residues 34-54, 78-99, 114-134, and 179-199; these read FGSL…FLAM, WLIR…YLHI, WNIG…GYVL, and FFTF…IHLL. Heme b contacts are provided by histidine 84 and histidine 98. 2 residues coordinate heme b: histidine 183 and histidine 197. Position 202 (histidine 202) interacts with a ubiquinone. Helical transmembrane passes span 227 to 247, 289 to 309, 321 to 341, and 348 to 368; these read YKDL…ALFT, LGGV…PILH, ITQI…WIGG, and FITI…ILFP.

This sequence belongs to the cytochrome b family. In terms of assembly, the cytochrome bc1 complex contains 3 respiratory subunits (MT-CYB, CYC1 and UQCRFS1), 2 core proteins (UQCRC1 and UQCRC2) and probably 6 low-molecular weight proteins. It depends on heme b as a cofactor.

The protein resides in the mitochondrion inner membrane. Its function is as follows. Component of the ubiquinol-cytochrome c reductase complex (complex III or cytochrome b-c1 complex) that is part of the mitochondrial respiratory chain. The b-c1 complex mediates electron transfer from ubiquinol to cytochrome c. Contributes to the generation of a proton gradient across the mitochondrial membrane that is then used for ATP synthesis. The sequence is that of Cytochrome b (mt-cyb) from Hemitrygon laosensis (Mekong freshwater stingray).